The chain runs to 320 residues: Acetyl-coenzyme A carboxylase carboxyl transferase subunit alpha (320 aa).

The 255-residue stretch at 41–295 (SIEEKAAQAL…GDAIAGALND (255 aa)) folds into the CoA carboxyltransferase C-terminal domain.

It belongs to the AccA family. In terms of assembly, acetyl-CoA carboxylase is a heterohexamer composed of biotin carboxyl carrier protein (AccB), biotin carboxylase (AccC) and two subunits each of ACCase subunit alpha (AccA) and ACCase subunit beta (AccD).

The protein resides in the cytoplasm. The catalysed reaction is N(6)-carboxybiotinyl-L-lysyl-[protein] + acetyl-CoA = N(6)-biotinyl-L-lysyl-[protein] + malonyl-CoA. It participates in lipid metabolism; malonyl-CoA biosynthesis; malonyl-CoA from acetyl-CoA: step 1/1. In terms of biological role, component of the acetyl coenzyme A carboxylase (ACC) complex. First, biotin carboxylase catalyzes the carboxylation of biotin on its carrier protein (BCCP) and then the CO(2) group is transferred by the carboxyltransferase to acetyl-CoA to form malonyl-CoA. This chain is Acetyl-coenzyme A carboxylase carboxyl transferase subunit alpha, found in Nitrobacter winogradskyi (strain ATCC 25391 / DSM 10237 / CIP 104748 / NCIMB 11846 / Nb-255).